The primary structure comprises 357 residues: Multiple sugar-binding periplasmic protein SbpA (357 aa).

An N-terminal signal peptide occupies residues 1–20 (MSSSFTTTLAGMAVGMLVLA).

Belongs to the bacterial solute-binding protein 2 family.

Its subcellular location is the periplasm. Functionally, mediates chemotaxis towards D-galactose, L-arabinose and D-fucose but not towards D-fructose. Probably part of a binding-protein high affinity uptake system. The polypeptide is Multiple sugar-binding periplasmic protein SbpA (sbpA) (Azospirillum brasilense).